Consider the following 119-residue polypeptide: NADH-quinone oxidoreductase subunit A (119 aa).

3 helical membrane-spanning segments follow: residues 7–27 (YPVLLFLLVGTGLGIALVSIG), 63–83 (LVAILFIIFDLETAFLFPWGV), and 88–108 (IGWPGFIAMMIFLLEFLLGFA).

The protein belongs to the complex I subunit 3 family. In terms of assembly, NDH-1 is composed of 14 different subunits. Subunits NuoA, H, J, K, L, M, N constitute the membrane sector of the complex.

The protein resides in the cell inner membrane. The enzyme catalyses a quinone + NADH + 5 H(+)(in) = a quinol + NAD(+) + 4 H(+)(out). Its function is as follows. NDH-1 shuttles electrons from NADH, via FMN and iron-sulfur (Fe-S) centers, to quinones in the respiratory chain. The immediate electron acceptor for the enzyme in this species is believed to be ubiquinone. Couples the redox reaction to proton translocation (for every two electrons transferred, four hydrogen ions are translocated across the cytoplasmic membrane), and thus conserves the redox energy in a proton gradient. The polypeptide is NADH-quinone oxidoreductase subunit A (Burkholderia ambifaria (strain MC40-6)).